We begin with the raw amino-acid sequence, 420 residues long: Phosphatidylinositol 5-phosphate 4-kinase type-2 gamma (420 aa).

The residue at position 2 (A2) is an N-acetylalanine. Position 26 is a phosphoserine (S26). The PIPK domain maps to 43–419; that stretch reads AADPLVGVFL…RFLDFISNIF (377 aa). Residues 69–75 are required for interaction with PIP5K1A; it reads VMLLPDD. Phosphoserine is present on S349.

Interacts with PIP5K1A; the interaction inhibits PIP5K1A kinase activity. Phosphorylated, phosphorylation is induced by EGF. Widely expressed, with the most abundant expression in kidney.

The protein resides in the endoplasmic reticulum. It is found in the cytoplasm. The catalysed reaction is a 1,2-diacyl-sn-glycero-3-phospho-(1D-myo-inositol-5-phosphate) + ATP = a 1,2-diacyl-sn-glycero-3-phospho-(1D-myo-inositol-4,5-bisphosphate) + ADP + H(+). It carries out the reaction 1,2-dihexadecanoyl-sn-glycero-3-phospho-(1D-myo-inositol-5-phosphate) + ATP = 1,2-dihexadecanoyl-sn-glycero-3-phospho-(1D-myo-inositol-4,5-bisphosphate) + ADP + H(+). The enzyme catalyses 1,2-dihexadecanoyl-sn-glycero-3-phospho-(1D-myo-inositol-5-phosphate) + GTP = 1,2-dihexadecanoyl-sn-glycero-3-phospho-(1D-myo-inositol-4,5-bisphosphate) + GDP + H(+). In terms of biological role, phosphatidylinositol 5-phosphate 4-kinase with low enzymatic activity. May be a GTP sensor, has higher GTP-dependent kinase activity than ATP-dependent kinase activity. PIP4Ks negatively regulate insulin signaling through a catalytic-independent mechanism. They interact with PIP5Ks and suppress PIP5K-mediated PtdIns(4,5)P2 synthesis and insulin-dependent conversion to PtdIns(3,4,5)P3. The protein is Phosphatidylinositol 5-phosphate 4-kinase type-2 gamma of Rattus norvegicus (Rat).